The chain runs to 242 residues: Sugar fermentation stimulation protein homolog (242 aa).

Belongs to the SfsA family.

This is Sugar fermentation stimulation protein homolog from Enterococcus mundtii.